The primary structure comprises 170 residues: uncharacterized protein (170 aa).

This is an uncharacterized protein from Homo sapiens (Human).